The chain runs to 82 residues: Small ribosomal subunit protein uS17 (82 aa).

Belongs to the universal ribosomal protein uS17 family. In terms of assembly, part of the 30S ribosomal subunit.

One of the primary rRNA binding proteins, it binds specifically to the 5'-end of 16S ribosomal RNA. The sequence is that of Small ribosomal subunit protein uS17 from Pelobacter propionicus (strain DSM 2379 / NBRC 103807 / OttBd1).